The following is a 218-amino-acid chain: Small ribosomal subunit protein uS3 (218 aa).

Met1 bears the N-acetylmethionine mark. Positions 23 to 95 constitute a KH type-2 domain; sequence LNELFTREFN…TVVLFAEKIL (73 aa).

This sequence belongs to the universal ribosomal protein uS3 family.

The sequence is that of Small ribosomal subunit protein uS3 (rps3) from Dictyostelium discoideum (Social amoeba).